Here is a 356-residue protein sequence, read N- to C-terminus: DNA polymerase IV (356 aa).

The UmuC domain maps to 1–188; that stretch reads MDTSRKIIHI…IPVTKFYGVG (188 aa). Mg(2+) is bound by residues aspartate 11 and aspartate 106. Glutamate 107 is an active-site residue.

This sequence belongs to the DNA polymerase type-Y family. In terms of assembly, monomer. The cofactor is Mg(2+).

It localises to the cytoplasm. It catalyses the reaction DNA(n) + a 2'-deoxyribonucleoside 5'-triphosphate = DNA(n+1) + diphosphate. In terms of biological role, poorly processive, error-prone DNA polymerase involved in untargeted mutagenesis. Copies undamaged DNA at stalled replication forks, which arise in vivo from mismatched or misaligned primer ends. These misaligned primers can be extended by PolIV. Exhibits no 3'-5' exonuclease (proofreading) activity. May be involved in translesional synthesis, in conjunction with the beta clamp from PolIII. This chain is DNA polymerase IV, found in Listeria innocua serovar 6a (strain ATCC BAA-680 / CLIP 11262).